A 635-amino-acid polypeptide reads, in one-letter code: Early transcription factor 70 kDa subunit (635 aa).

One can recognise a Helicase ATP-binding domain in the interval 32–185 (RSIIDENKSV…SNIISLMSDE (154 aa)). 45-52 (HIMGSGKT) serves as a coordination point for ATP. Positions 135-138 (DEAH) match the DEXH box motif. A Helicase C-terminal domain is found at 326-505 (KFKYFIGKIT…TLPFDIKKLL (180 aa)).

Belongs to the helicase family. VETF subfamily. Heterodimer of a 70 kDa and a 82 kDa subunit.

It is found in the virion. Its function is as follows. Acts with RNA polymerase to initiate transcription from early gene promoters. A DNA-dependent ATPase activity is associated with VETF. In Erythrocebus patas (Red guenon), this protein is Early transcription factor 70 kDa subunit (VETFS).